Reading from the N-terminus, the 84-residue chain is Small ribosomal subunit protein uS17 (84 aa).

It belongs to the universal ribosomal protein uS17 family. As to quaternary structure, part of the 30S ribosomal subunit.

Functionally, one of the primary rRNA binding proteins, it binds specifically to the 5'-end of 16S ribosomal RNA. This chain is Small ribosomal subunit protein uS17, found in Blochmanniella pennsylvanica (strain BPEN).